The primary structure comprises 327 residues: MKQPGFIRLATLALLSTLSFFSHGETILRLAYAENSQPVKDALHFLGQQVEEKTGGDIKVQYFPDGQLGGERELVELTQVGVVDITKVSSGLMESFSPEYGVFSLPYLFATVEEYYRVMDNPQVMEPVYQSTAAQGFIGVGWYDSGARNFYMSKAPIKRIEDLRGKKIRVMQSETAIQTLKLLGASPIAMSQAEVYTSLQQGILDGAENNEFALTIARHGEVARYYTYDMHTRIPDILLMSTLTLEKLTPEQQRIVEAAIKASIEFEKAAWDKEIEKTRLAAVKDFNVEFYEIDKKPFQEAVQPIYDGLKNKPRLYGLYQRIQTAKN.

Residues 1 to 24 (MKQPGFIRLATLALLSTLSFFSHG) form the signal peptide.

This is an uncharacterized protein from Salmonella typhimurium (strain LT2 / SGSC1412 / ATCC 700720).